The sequence spans 327 residues: Methionyl-tRNA formyltransferase (327 aa).

S121–P124 lines the (6S)-5,6,7,8-tetrahydrofolate pocket.

The protein belongs to the Fmt family.

It catalyses the reaction L-methionyl-tRNA(fMet) + (6R)-10-formyltetrahydrofolate = N-formyl-L-methionyl-tRNA(fMet) + (6S)-5,6,7,8-tetrahydrofolate + H(+). Functionally, attaches a formyl group to the free amino group of methionyl-tRNA(fMet). The formyl group appears to play a dual role in the initiator identity of N-formylmethionyl-tRNA by promoting its recognition by IF2 and preventing the misappropriation of this tRNA by the elongation apparatus. This Burkholderia pseudomallei (strain 1710b) protein is Methionyl-tRNA formyltransferase.